The following is a 40-amino-acid chain: LTCVKSDSIWFPTSEDCPDGQNLCFKKWQYISPRMYDFTR.

Cys3 and Cys24 are oxidised to a cystine.

The protein belongs to the three-finger toxin family. Short-chain subfamily. Aminergic toxin sub-subfamily. As to quaternary structure, monomer. In terms of processing, contains 4 disulfide bonds. In terms of tissue distribution, expressed by the venom gland.

The protein resides in the secreted. Functionally, binds irreversibly and specifically to M1 (CHRM1) muscarinic acetylcholine receptors, blocking further binding of antagonists and preventing the action of agonists. The chain is Muscarinic m1-toxin3 from Dendroaspis angusticeps (Eastern green mamba).